Here is a 352-residue protein sequence, read N- to C-terminus: Nuclear receptor subfamily 1 group I member 3 (352 aa).

The nuclear receptor DNA-binding region spans 8-83 (LRNCVVCGDQ…AGMRKDMILS (76 aa)). The NR C4-type zinc finger occupies 11-31 (CVVCGDQATGYHFNALTCEGC). Thr-38 is subject to Phosphothreonine; by PKC. An NR C4-type zinc finger spans residues 47–71 (CPFAGSCEVSKTQRRHCPACRLQKC). The 244-residue stretch at 109-352 (EQEELIRTLL…MMPLLQEICS (244 aa)) folds into the NR LBD domain.

The protein belongs to the nuclear hormone receptor family. NR1 subfamily. Interacts with ECT2. Heterodimer of NR1I3 and RXR. Interacts with PSMC4. Directly interacts with DNAJC7. The DNAJC7-NR1I3 complex may also include HSP90. Interacts with CRY1. Interacts with CRY2 in a ligand-dependent manner. Post-translationally, phosphorylated at Thr-38 by PKC, dephosphorylation of Thr-38 is required for nuclear translocation and activation. As to expression, predominantly expressed in liver.

It is found in the nucleus. Its subcellular location is the cytoplasm. The protein resides in the cytoskeleton. In terms of biological role, binds and transactivates the retinoic acid response elements that control expression of the retinoic acid receptor beta 2 and alcohol dehydrogenase 3 genes. Transactivates both the phenobarbital responsive element module of the human CYP2B6 gene and the CYP3A4 xenobiotic response element. The sequence is that of Nuclear receptor subfamily 1 group I member 3 (NR1I3) from Homo sapiens (Human).